A 636-amino-acid chain; its full sequence is Threonine--tRNA ligase (636 aa).

The TGS domain maps to 1–60 (MPIINFNNKEILFNYPISIIEIIKKFDKNLSENCIAAKINGKLLDVSEIINYDGSLELVK). The segment at 242–533 (DHRKIGKKLD…ITEEFSGKYP (292 aa)) is catalytic. Cys333, His384, and His510 together coordinate Zn(2+).

This sequence belongs to the class-II aminoacyl-tRNA synthetase family. Homodimer. Requires Zn(2+) as cofactor.

It localises to the cytoplasm. The enzyme catalyses tRNA(Thr) + L-threonine + ATP = L-threonyl-tRNA(Thr) + AMP + diphosphate + H(+). In terms of biological role, catalyzes the attachment of threonine to tRNA(Thr) in a two-step reaction: L-threonine is first activated by ATP to form Thr-AMP and then transferred to the acceptor end of tRNA(Thr). Also edits incorrectly charged L-seryl-tRNA(Thr). The polypeptide is Threonine--tRNA ligase (Wigglesworthia glossinidia brevipalpis).